The primary structure comprises 338 residues: Large ribosomal subunit protein uL10 (338 aa).

The span at 309 to 327 shows a compositional bias: basic and acidic residues; the sequence is KAEVEEAKEEEKEEKKEEA. A disordered region spans residues 309 to 338; sequence KAEVEEAKEEEKEEKKEEAAPAAAGLGLLF.

The protein belongs to the universal ribosomal protein uL10 family. In terms of assembly, part of the 50S ribosomal subunit. Forms part of the ribosomal stalk which helps the ribosome interact with GTP-bound translation factors. Forms a heptameric L10(L12)2(L12)2(L12)2 complex, where L10 forms an elongated spine to which the L12 dimers bind in a sequential fashion.

Forms part of the ribosomal stalk, playing a central role in the interaction of the ribosome with GTP-bound translation factors. The sequence is that of Large ribosomal subunit protein uL10 from Methanothermococcus thermolithotrophicus (Methanococcus thermolithotrophicus).